We begin with the raw amino-acid sequence, 195 residues long: Holliday junction branch migration complex subunit RuvA (195 aa).

The tract at residues 1 to 66 is domain I; it reads MNYLVFKVIY…LIIKDLYGFR (66 aa). The interval 67 to 141 is domain II; sequence TYNERLLFID…KYINKVSEKN (75 aa). Asn141 is a region of interest (flexible linker). Residues 141–195 are domain III; sequence NPWAKELSIGLENLGYDKKDIEYAITKVKVDTQQNIDISEIIGCAIKEISLRHEN.

This sequence belongs to the RuvA family. In terms of assembly, homotetramer. Forms an RuvA(8)-RuvB(12)-Holliday junction (HJ) complex. HJ DNA is sandwiched between 2 RuvA tetramers; dsDNA enters through RuvA and exits via RuvB. An RuvB hexamer assembles on each DNA strand where it exits the tetramer. Each RuvB hexamer is contacted by two RuvA subunits (via domain III) on 2 adjacent RuvB subunits; this complex drives branch migration. In the full resolvosome a probable DNA-RuvA(4)-RuvB(12)-RuvC(2) complex forms which resolves the HJ.

It localises to the cytoplasm. Its function is as follows. The RuvA-RuvB-RuvC complex processes Holliday junction (HJ) DNA during genetic recombination and DNA repair, while the RuvA-RuvB complex plays an important role in the rescue of blocked DNA replication forks via replication fork reversal (RFR). RuvA specifically binds to HJ cruciform DNA, conferring on it an open structure. The RuvB hexamer acts as an ATP-dependent pump, pulling dsDNA into and through the RuvAB complex. HJ branch migration allows RuvC to scan DNA until it finds its consensus sequence, where it cleaves and resolves the cruciform DNA. This is Holliday junction branch migration complex subunit RuvA from Ureaplasma urealyticum serovar 10 (strain ATCC 33699 / Western).